The chain runs to 98 residues: MATTIKPLEDRVLVQPLEAEQTTASGLVIPDTAKEKPQEGKVISAGPGRVDDKGTRVPMDVKEGDVVIFSKYGGTEVKYDGQEYLLLNARDILAVVEK.

The disordered stretch occupies residues 35 to 57 (EKPQEGKVISAGPGRVDDKGTRV).

Belongs to the GroES chaperonin family. Heptamer of 7 subunits arranged in a ring. Interacts with the chaperonin GroEL.

Its subcellular location is the cytoplasm. In terms of biological role, together with the chaperonin GroEL, plays an essential role in assisting protein folding. The GroEL-GroES system forms a nano-cage that allows encapsulation of the non-native substrate proteins and provides a physical environment optimized to promote and accelerate protein folding. GroES binds to the apical surface of the GroEL ring, thereby capping the opening of the GroEL channel. The sequence is that of Co-chaperonin GroES from Cutibacterium acnes (strain DSM 16379 / KPA171202) (Propionibacterium acnes).